Here is a 1084-residue protein sequence, read N- to C-terminus: CRISPR-associated endonuclease Cas9 (1084 aa).

The active-site For RuvC-like nuclease domain is the Asp-8. Asp-8, Glu-496, and Glu-500 together coordinate Mn(2+). The HNH Cas9-type domain occupies 504–665 (TEKRAREMDG…MDEEIDARSM (162 aa)). His-573 functions as the Proton acceptor for HNH nuclease domain in the catalytic mechanism. His-727 contributes to the Mn(2+) binding site.

The protein belongs to the CRISPR-associated protein Cas9 family. Subtype II-C subfamily. In terms of assembly, monomer. Binds crRNA and tracrRNA. It depends on Mg(2+) as a cofactor.

Its function is as follows. CRISPR (clustered regularly interspaced short palindromic repeat) is an adaptive immune system that provides protection against mobile genetic elements (viruses, transposable elements and conjugative plasmids). CRISPR clusters contain spacers, sequences complementary to antecedent mobile elements, and target invading nucleic acids. CRISPR clusters are transcribed and processed into CRISPR RNA (crRNA). In type II CRISPR systems correct processing of pre-crRNA requires a trans-encoded small RNA (tracrRNA), endogenous ribonuclease 3 (rnc) and this protein. The tracrRNA serves as a guide for ribonuclease 3-aided processing of pre-crRNA. Subsequently Cas9/crRNA/tracrRNA endonucleolytically cleaves linear or circular dsDNA target complementary to the spacer; Cas9 is inactive in the absence of the 2 guide RNAs (gRNA). Cas9 recognizes the protospacer adjacent motif (PAM) in the CRISPR repeat sequences to help distinguish self versus nonself, as targets within the bacterial CRISPR locus do not have PAMs. PAM recognition is also required for catalytic activity. In Corynebacterium diphtheriae (strain ATCC 700971 / NCTC 13129 / Biotype gravis), this protein is CRISPR-associated endonuclease Cas9.